A 315-amino-acid polypeptide reads, in one-letter code: tRNA dimethylallyltransferase (315 aa).

13–20 (GPTASGKT) provides a ligand contact to ATP. 15 to 20 (TASGKT) is a substrate binding site. 4 interaction with substrate tRNA regions span residues 38–41 (DSAL), 162–166 (QRLSR), 243–248 (RCVGYR), and 276–283 (KRQITWLR).

Belongs to the IPP transferase family. Monomer. Mg(2+) is required as a cofactor.

The enzyme catalyses adenosine(37) in tRNA + dimethylallyl diphosphate = N(6)-dimethylallyladenosine(37) in tRNA + diphosphate. Catalyzes the transfer of a dimethylallyl group onto the adenine at position 37 in tRNAs that read codons beginning with uridine, leading to the formation of N6-(dimethylallyl)adenosine (i(6)A). The polypeptide is tRNA dimethylallyltransferase (Vibrio vulnificus (strain YJ016)).